The following is a 193-amino-acid chain: Adenine phosphoribosyltransferase (193 aa).

It belongs to the purine/pyrimidine phosphoribosyltransferase family. As to quaternary structure, homodimer.

It is found in the cytoplasm. The enzyme catalyses AMP + diphosphate = 5-phospho-alpha-D-ribose 1-diphosphate + adenine. It participates in purine metabolism; AMP biosynthesis via salvage pathway; AMP from adenine: step 1/1. Its function is as follows. Catalyzes a salvage reaction resulting in the formation of AMP, that is energically less costly than de novo synthesis. The polypeptide is Adenine phosphoribosyltransferase (Bifidobacterium adolescentis (strain ATCC 15703 / DSM 20083 / NCTC 11814 / E194a)).